Here is a 359-residue protein sequence, read N- to C-terminus: Mitochondrial calcium uniporter regulator 1 (359 aa).

Residues 1 to 68 (MDCGSVGGQR…ARGGVSRASP (68 aa)) are Mitochondrial intermembrane-facing. A helical membrane pass occupies residues 69–85 (LLLLLLVPSPRLAAAAP). At 86–338 (RRQLGDWERS…LESHKLDNIK (253 aa)) the chain is on the mitochondrial matrix side. The stretch at 235 to 310 (EKSEFSALRA…VALHAQQDRA (76 aa)) forms a coiled coil. The helical transmembrane segment at 339 to 358 (YLAGSIFTCLTVALGFYRLW) threads the bilayer. Residue Ile-359 is a topological domain, mitochondrial intermembrane.

It belongs to the CCDC90 family. In terms of assembly, interacts (via coiled coil regions) with MCU; the interaction is direct. Interacts with SMDT1/EMRE; the interaction is direct. Interacts with PPIF. In terms of tissue distribution, ubiquitously expressed.

It localises to the mitochondrion inner membrane. Key regulator of mitochondrial calcium uniporter (MCU) required for calcium entry into mitochondrion. Plays a direct role in uniporter-mediated calcium uptake via a direct interaction with MCU. Probably involved in the assembly of the membrane components of the uniporter complex (uniplex). The polypeptide is Mitochondrial calcium uniporter regulator 1 (Homo sapiens (Human)).